Reading from the N-terminus, the 529-residue chain is Peptide chain release factor 3 (529 aa).

The region spanning 11 to 280 is the tr-type G domain; it reads AKRRTFAIIS…GLVEWAPAPM (270 aa). Residues 20-27, 88-92, and 142-145 each bind GTP; these read SHPDAGKT, DTPGH, and NKLD.

The protein belongs to the TRAFAC class translation factor GTPase superfamily. Classic translation factor GTPase family. PrfC subfamily.

Its subcellular location is the cytoplasm. In terms of biological role, increases the formation of ribosomal termination complexes and stimulates activities of RF-1 and RF-2. It binds guanine nucleotides and has strong preference for UGA stop codons. It may interact directly with the ribosome. The stimulation of RF-1 and RF-2 is significantly reduced by GTP and GDP, but not by GMP. The protein is Peptide chain release factor 3 of Yersinia enterocolitica serotype O:8 / biotype 1B (strain NCTC 13174 / 8081).